The primary structure comprises 560 residues: Membrane protein insertase YidC (560 aa).

Transmembrane regions (helical) follow at residues 5-25, 334-354, 357-377, 431-451, 476-496, and 522-542; these read IINL…WQYF, AIDF…MNFF, YVGN…LLMF, LPIL…YVTI, LFGL…WPIL, and FMPL…LIYW.

Belongs to the OXA1/ALB3/YidC family. Type 1 subfamily. In terms of assembly, interacts with the Sec translocase complex via SecD. Specifically interacts with transmembrane segments of nascent integral membrane proteins during membrane integration.

The protein resides in the cell inner membrane. Functionally, required for the insertion and/or proper folding and/or complex formation of integral membrane proteins into the membrane. Involved in integration of membrane proteins that insert both dependently and independently of the Sec translocase complex, as well as at least some lipoproteins. Aids folding of multispanning membrane proteins. The chain is Membrane protein insertase YidC from Rickettsia rickettsii (strain Iowa).